The following is a 603-amino-acid chain: Adenine deaminase (603 aa).

The protein belongs to the metallo-dependent hydrolases superfamily. Adenine deaminase family. In terms of assembly, homodimer. Requires Mn(2+) as cofactor.

It carries out the reaction adenine + H2O + H(+) = hypoxanthine + NH4(+). This Klebsiella pneumoniae (strain 342) protein is Adenine deaminase.